The chain runs to 429 residues: MDRIHITGGAPLHGEIPISGAKNAALPLMIASLLTGETVELANVPRLADIASLLRILGNHGVDHMVVGKRPGQTAETGQTIRLTASNVIDTTAPYELVSTMRASFWVIAPLLARFGEARVSMPGGCAIGTRPVDLLLMAMERLGATIEIDGGYVVARTRNGLRGAEIVFPKVTVGGTHVALMAASLAQGTTVIDNAAREPEVVDLAECLSKMGARIEGAGTPRIVVEGVSRLGGARHEVLPDRIETGTYAMAVAMTGGDVILRDTRADLLHSALDVLATTGTEVTALPNGIRVRRNGAGVAAVDVTTDPFPGFPTDLQAQFMALMTKARGQSRIRETIFENRFMHVQELARLGARIRLEGDLAVVDGVERLRGAPVMATDLRASVSLVIAGLAAEGETIINRVYHLDRGFEALEAKLSRCGAQIRRERV.

22 to 23 (KN) contributes to the phosphoenolpyruvate binding site. R102 is a binding site for UDP-N-acetyl-alpha-D-glucosamine. C126 serves as the catalytic Proton donor. C126 is modified (2-(S-cysteinyl)pyruvic acid O-phosphothioketal). UDP-N-acetyl-alpha-D-glucosamine contacts are provided by residues 131 to 135 (RPVDL), D316, and I338.

It belongs to the EPSP synthase family. MurA subfamily.

It localises to the cytoplasm. The catalysed reaction is phosphoenolpyruvate + UDP-N-acetyl-alpha-D-glucosamine = UDP-N-acetyl-3-O-(1-carboxyvinyl)-alpha-D-glucosamine + phosphate. It participates in cell wall biogenesis; peptidoglycan biosynthesis. Its function is as follows. Cell wall formation. Adds enolpyruvyl to UDP-N-acetylglucosamine. In Methylobacterium nodulans (strain LMG 21967 / CNCM I-2342 / ORS 2060), this protein is UDP-N-acetylglucosamine 1-carboxyvinyltransferase.